The primary structure comprises 339 residues: Phosphate acyltransferase (339 aa).

Belongs to the PlsX family. In terms of assembly, homodimer. Probably interacts with PlsY.

Its subcellular location is the cytoplasm. The catalysed reaction is a fatty acyl-[ACP] + phosphate = an acyl phosphate + holo-[ACP]. Its pathway is lipid metabolism; phospholipid metabolism. In terms of biological role, catalyzes the reversible formation of acyl-phosphate (acyl-PO(4)) from acyl-[acyl-carrier-protein] (acyl-ACP). This enzyme utilizes acyl-ACP as fatty acyl donor, but not acyl-CoA. The sequence is that of Phosphate acyltransferase from Vesicomyosocius okutanii subsp. Calyptogena okutanii (strain HA).